The sequence spans 202 residues: ATP-dependent Clp protease proteolytic subunit (202 aa).

The Nucleophile role is filled by S106. The active site involves H131.

Belongs to the peptidase S14 family. In terms of assembly, fourteen ClpP subunits assemble into 2 heptameric rings which stack back to back to give a disk-like structure with a central cavity, resembling the structure of eukaryotic proteasomes.

The protein localises to the cytoplasm. It carries out the reaction Hydrolysis of proteins to small peptides in the presence of ATP and magnesium. alpha-casein is the usual test substrate. In the absence of ATP, only oligopeptides shorter than five residues are hydrolyzed (such as succinyl-Leu-Tyr-|-NHMec, and Leu-Tyr-Leu-|-Tyr-Trp, in which cleavage of the -Tyr-|-Leu- and -Tyr-|-Trp bonds also occurs).. Its function is as follows. Cleaves peptides in various proteins in a process that requires ATP hydrolysis. Has a chymotrypsin-like activity. Plays a major role in the degradation of misfolded proteins. The protein is ATP-dependent Clp protease proteolytic subunit of Shewanella sp. (strain ANA-3).